The chain runs to 142 residues: uncharacterized protein (142 aa).

The next 3 helical transmembrane spans lie at 3–23, 30–50, and 91–111; these read LIFIAKMLQYSFLPFSPFNLL, SVSWFITYSVIVSIWGFAVWI, and FFLLYLFLTASNLIVQLAYFS.

It localises to the membrane. This is an uncharacterized protein from Saccharomyces cerevisiae (strain ATCC 204508 / S288c) (Baker's yeast).